The primary structure comprises 785 residues: Endonuclease MutS2 (785 aa).

Residue 331-338 (GPNTGGKT) coordinates ATP. The Smr domain occupies 710 to 785 (LDLRGLYADE…GLGVTVVELA (76 aa)).

The protein belongs to the DNA mismatch repair MutS family. MutS2 subfamily. Homodimer. Binds to stalled ribosomes, contacting rRNA.

Functionally, endonuclease that is involved in the suppression of homologous recombination and thus may have a key role in the control of bacterial genetic diversity. In terms of biological role, acts as a ribosome collision sensor, splitting the ribosome into its 2 subunits. Detects stalled/collided 70S ribosomes which it binds and splits by an ATP-hydrolysis driven conformational change. Acts upstream of the ribosome quality control system (RQC), a ribosome-associated complex that mediates the extraction of incompletely synthesized nascent chains from stalled ribosomes and their subsequent degradation. Probably generates substrates for RQC. This chain is Endonuclease MutS2, found in Pelotomaculum thermopropionicum (strain DSM 13744 / JCM 10971 / SI).